The following is a 199-amino-acid chain: dTTP/UTP pyrophosphatase (199 aa).

Residue aspartate 78 is the Proton acceptor of the active site.

This sequence belongs to the Maf family. YhdE subfamily. The cofactor is a divalent metal cation.

It localises to the cytoplasm. It carries out the reaction dTTP + H2O = dTMP + diphosphate + H(+). The enzyme catalyses UTP + H2O = UMP + diphosphate + H(+). Nucleoside triphosphate pyrophosphatase that hydrolyzes dTTP and UTP. May have a dual role in cell division arrest and in preventing the incorporation of modified nucleotides into cellular nucleic acids. This Clostridium acetobutylicum (strain ATCC 824 / DSM 792 / JCM 1419 / IAM 19013 / LMG 5710 / NBRC 13948 / NRRL B-527 / VKM B-1787 / 2291 / W) protein is dTTP/UTP pyrophosphatase.